A 403-amino-acid chain; its full sequence is MTQDWDAGRLDSDLEGAAFDTLAVRAGQRRTPEGEHGEALFTTSSYVFRTAADAAARFAGEVPGNVYSRYTNPTVRTFEERIAALEGAEQAVATASGMSAILALVMSLCSSGDHVLVSRSVFGSTISLFDKYFKRFGIQVDYPPLSDLAAWEAACKPNTKLFFVESPSNPLAELVDIAALAEIAHAKGALLAVDNCFCTPALQQPLKLGADVVIHSATKYIDGQGRGMGGVVAGRGEQMKEVVGFLRTAGPTLSPFNAWLFLKGLETLRIRMQAHSASALALAEWLERQPGIERVYYAGLPSHPQHELARRQQSGFGAVVSFDVKGGRDAAWRFIDATRMVSITTNLGDTKTTIAHPATTSHGRLSPEDRARAGIGDSLIRVAVGLEDLDDLKADMARGLAAL.

Lysine 219 is subject to N6-(pyridoxal phosphate)lysine.

The protein belongs to the trans-sulfuration enzymes family. MetZ subfamily. In terms of assembly, homotetramer. Requires pyridoxal 5'-phosphate as cofactor.

The catalysed reaction is O-succinyl-L-homoserine + hydrogen sulfide = L-homocysteine + succinate. It participates in amino-acid biosynthesis; L-methionine biosynthesis via de novo pathway; L-homocysteine from O-succinyl-L-homoserine: step 1/1. Catalyzes the formation of L-homocysteine from O-succinyl-L-homoserine (OSHS) and hydrogen sulfide. Cannot use the other activated form of L-homoserine, O-acetyl-L-homoserine, as a substrate. This Pseudomonas aeruginosa (strain ATCC 15692 / DSM 22644 / CIP 104116 / JCM 14847 / LMG 12228 / 1C / PRS 101 / PAO1) protein is O-succinylhomoserine sulfhydrylase.